Here is a 244-residue protein sequence, read N- to C-terminus: uncharacterized protein (244 aa).

Positions 1–78 (MKKRFIYHDE…PKFNFMDRYY (78 aa)) constitute a WGR domain.

This is an uncharacterized protein from Escherichia coli (strain K12).